A 318-amino-acid chain; its full sequence is Phosphate acetyltransferase (318 aa).

The protein belongs to the phosphate acetyltransferase and butyryltransferase family.

The protein resides in the cytoplasm. It catalyses the reaction acetyl-CoA + phosphate = acetyl phosphate + CoA. The protein operates within metabolic intermediate biosynthesis; acetyl-CoA biosynthesis; acetyl-CoA from acetate: step 2/2. In Paracoccus denitrificans, this protein is Phosphate acetyltransferase (pta).